The following is a 411-amino-acid chain: Probable tRNA pseudouridine synthase D (411 aa).

D81 (nucleophile) is an active-site residue. The TRUD domain maps to 154–375 (GTPNFFGLQR…SGSYRPADTL (222 aa)).

It belongs to the pseudouridine synthase TruD family.

The catalysed reaction is uridine(13) in tRNA = pseudouridine(13) in tRNA. Its function is as follows. Could be responsible for synthesis of pseudouridine from uracil-13 in transfer RNAs. The polypeptide is Probable tRNA pseudouridine synthase D (Archaeoglobus fulgidus (strain ATCC 49558 / DSM 4304 / JCM 9628 / NBRC 100126 / VC-16)).